A 672-amino-acid polypeptide reads, in one-letter code: tRNA 5-methylaminomethyl-2-thiouridine biosynthesis bifunctional protein MnmC (672 aa).

Positions 1 to 235 (MTRVLEPAEP…KRDMTVARFA (235 aa)) are tRNA (mnm(5)s(2)U34)-methyltransferase. Positions 259 to 672 (IGAGLAGCAV…SAGPGVDAAG (414 aa)) are FAD-dependent cmnm(5)s(2)U34 oxidoreductase.

In the N-terminal section; belongs to the methyltransferase superfamily. tRNA (mnm(5)s(2)U34)-methyltransferase family. It in the C-terminal section; belongs to the DAO family. FAD is required as a cofactor.

Its subcellular location is the cytoplasm. The catalysed reaction is 5-aminomethyl-2-thiouridine(34) in tRNA + S-adenosyl-L-methionine = 5-methylaminomethyl-2-thiouridine(34) in tRNA + S-adenosyl-L-homocysteine + H(+). Its function is as follows. Catalyzes the last two steps in the biosynthesis of 5-methylaminomethyl-2-thiouridine (mnm(5)s(2)U) at the wobble position (U34) in tRNA. Catalyzes the FAD-dependent demodification of cmnm(5)s(2)U34 to nm(5)s(2)U34, followed by the transfer of a methyl group from S-adenosyl-L-methionine to nm(5)s(2)U34, to form mnm(5)s(2)U34. In Cupriavidus metallidurans (strain ATCC 43123 / DSM 2839 / NBRC 102507 / CH34) (Ralstonia metallidurans), this protein is tRNA 5-methylaminomethyl-2-thiouridine biosynthesis bifunctional protein MnmC.